A 464-amino-acid chain; its full sequence is tRNA modification GTPase MnmE (464 aa).

Residues arginine 27, glutamate 90, and lysine 129 each contribute to the (6S)-5-formyl-5,6,7,8-tetrahydrofolate site. Residues 222–384 (GIALVLAGSV…LYDKIRSLTC (163 aa)) enclose the TrmE-type G domain. Residues 232 to 237 (NVGKSS), 251 to 257 (SSYAGTT), and 276 to 279 (DTAG) each bind GTP. Residues serine 236 and threonine 257 each contribute to the Mg(2+) site. Residue lysine 464 coordinates (6S)-5-formyl-5,6,7,8-tetrahydrofolate.

The protein belongs to the TRAFAC class TrmE-Era-EngA-EngB-Septin-like GTPase superfamily. TrmE GTPase family. In terms of assembly, homodimer. Heterotetramer of two MnmE and two MnmG subunits. The cofactor is K(+).

It localises to the cytoplasm. Functionally, exhibits a very high intrinsic GTPase hydrolysis rate. Involved in the addition of a carboxymethylaminomethyl (cmnm) group at the wobble position (U34) of certain tRNAs, forming tRNA-cmnm(5)s(2)U34. This chain is tRNA modification GTPase MnmE, found in Borrelia turicatae (strain 91E135).